The following is a 184-amino-acid chain: Large ribosomal subunit protein uL15 (184 aa).

The interval 1–45 (MNLSSLRPAKGSVRNKKRVGRGQGSGNGTTAGKGNKGQQARSGYK) is disordered. Gly residues predominate over residues 21–35 (RGQGSGNGTTAGKGN).

The protein belongs to the universal ribosomal protein uL15 family. As to quaternary structure, part of the 50S ribosomal subunit.

Binds to the 23S rRNA. In Chlorobium chlorochromatii (strain CaD3), this protein is Large ribosomal subunit protein uL15.